Consider the following 133-residue polypeptide: Aspartate 1-decarboxylase (133 aa).

The active-site Schiff-base intermediate with substrate; via pyruvic acid is the Ser26. The residue at position 26 (Ser26) is a Pyruvic acid (Ser). Residue Thr58 coordinates substrate. Residue Tyr59 is the Proton donor of the active site. Residue 74-76 (GAA) coordinates substrate.

Belongs to the PanD family. As to quaternary structure, heterooctamer of four alpha and four beta subunits. It depends on pyruvate as a cofactor. Is synthesized initially as an inactive proenzyme, which is activated by self-cleavage at a specific serine bond to produce a beta-subunit with a hydroxyl group at its C-terminus and an alpha-subunit with a pyruvoyl group at its N-terminus.

Its subcellular location is the cytoplasm. It carries out the reaction L-aspartate + H(+) = beta-alanine + CO2. Its pathway is cofactor biosynthesis; (R)-pantothenate biosynthesis; beta-alanine from L-aspartate: step 1/1. Its function is as follows. Catalyzes the pyruvoyl-dependent decarboxylation of aspartate to produce beta-alanine. The sequence is that of Aspartate 1-decarboxylase from Legionella pneumophila (strain Lens).